The following is an 849-amino-acid chain: Serine/threonine-protein phosphatase 4 regulatory subunit 3B (849 aa).

The WH1 domain maps to 1 to 100 (MSDTRRRVKV…DEIWEKICQV (100 aa)). Residues serine 117 and serine 695 each carry the phosphoserine modification. Over residues 714–724 (EMWFNEDEEEE) the composition is skewed to acidic residues. The tract at residues 714–849 (EMWFNEDEEE…SPRKRPRLGS (136 aa)) is disordered. Residues 733–764 (EKPKPEDDFPDNYEKFMETKKAKESEDKENLP) show a composition bias toward basic and acidic residues. A compositionally biased stretch (polar residues) spans 776–818 (FSHSASAANGTNSKSVVAQIPPATSNGSSSKTTNLPTSVTATK). The segment covering 827 to 838 (YPDDEEEDEEEE) has biased composition (acidic residues). The residue at position 840 (serine 840) is a Phosphoserine.

It belongs to the SMEK family. Serine/threonine-protein phosphatase 4 (PP4) occurs in different assemblies of the catalytic and one or more regulatory subunits. Component of the PP4 complex PPP4C-PPP4R2-PPP4R3B. As to expression, moderately expressed in tissues and specific brain regions examined.

The protein localises to the cytoplasm. Its subcellular location is the cytoskeleton. It is found in the microtubule organizing center. It localises to the centrosome. The protein resides in the nucleus. Its function is as follows. Regulatory subunit of serine/threonine-protein phosphatase 4 (PP4). May regulate the activity of PPP4C at centrosomal microtubule organizing centers. In Homo sapiens (Human), this protein is Serine/threonine-protein phosphatase 4 regulatory subunit 3B.